Here is a 240-residue protein sequence, read N- to C-terminus: 7-cyano-7-deazaguanine synthase (240 aa).

An ATP-binding site is contributed by 9–19 (FSGGLDSTACL). Zn(2+)-binding residues include C195, C210, C213, and C216.

This sequence belongs to the QueC family. The cofactor is Zn(2+).

The enzyme catalyses 7-carboxy-7-deazaguanine + NH4(+) + ATP = 7-cyano-7-deazaguanine + ADP + phosphate + H2O + H(+). It functions in the pathway purine metabolism; 7-cyano-7-deazaguanine biosynthesis. Its function is as follows. Catalyzes the ATP-dependent conversion of 7-carboxy-7-deazaguanine (CDG) to 7-cyano-7-deazaguanine (preQ(0)). The protein is 7-cyano-7-deazaguanine synthase of Pyrococcus furiosus (strain ATCC 43587 / DSM 3638 / JCM 8422 / Vc1).